A 351-amino-acid chain; its full sequence is Photosystem II D2 protein (351 aa).

Residues 39–59 (TAYLAIGGWLTGTTFVTSWYT) form a helical membrane-spanning segment. Histidine 116 is a binding site for chlorophyll a. Residues 123–139 (GFMLRQFELARLIGIRP) traverse the membrane as a helical segment. Pheophytin a contacts are provided by glutamine 128 and asparagine 141. The chain crosses the membrane as a helical span at residues 151–164 (VFVSVFLIYPLGQS). Residue histidine 196 coordinates chlorophyll a. The chain crosses the membrane as a helical span at residues 206-226 (GALLSAIHGVTVENTLYQDGE). Residues histidine 213 and phenylalanine 260 each contribute to the a plastoquinone site. Residue histidine 213 coordinates Fe cation. Histidine 267 provides a ligand contact to Fe cation. The chain crosses the membrane as a helical span at residues 277–293 (GLWTSSIGIIGLALNLR).

Belongs to the reaction center PufL/M/PsbA/D family. PSII is composed of 1 copy each of membrane proteins PsbA, PsbB, PsbC, PsbD, PsbE, PsbF, PsbH, PsbI, PsbJ, PsbK, PsbL, PsbM, PsbT, PsbX, PsbY, PsbZ, Psb30/Ycf12, peripheral proteins PsbO, CyanoQ (PsbQ), PsbU, PsbV and a large number of cofactors. It forms dimeric complexes. Requires The D1/D2 heterodimer binds P680, chlorophylls that are the primary electron donor of PSII, and subsequent electron acceptors. It shares a non-heme iron and each subunit binds pheophytin, quinone, additional chlorophylls, carotenoids and lipids. There is also a Cl(-1) ion associated with D1 and D2, which is required for oxygen evolution. The PSII complex binds additional chlorophylls, carotenoids and specific lipids. as cofactor.

Its subcellular location is the host cellular thylakoid membrane. The catalysed reaction is 2 a plastoquinone + 4 hnu + 2 H2O = 2 a plastoquinol + O2. In terms of biological role, photosystem II (PSII) is a light-driven water:plastoquinone oxidoreductase that uses light energy to abstract electrons from H(2)O, generating O(2) and a proton gradient subsequently used for ATP formation. It consists of a core antenna complex that captures photons, and an electron transfer chain that converts photonic excitation into a charge separation. The D1/D2 (PsbA/PsbD) reaction center heterodimer binds P680, the primary electron donor of PSII as well as several subsequent electron acceptors. D2 is needed for assembly of a stable PSII complex. The chain is Photosystem II D2 protein (psbD) from Synechococcus phage S-RSM2.